The following is a 259-amino-acid chain: Small ribosomal subunit protein uS2 (259 aa).

The disordered stretch occupies residues 232 to 259 (KAMEAEETKAAEKAVETEAKEETPQEAK).

The protein belongs to the universal ribosomal protein uS2 family.

The sequence is that of Small ribosomal subunit protein uS2 from Maridesulfovibrio salexigens (strain ATCC 14822 / DSM 2638 / NCIMB 8403 / VKM B-1763) (Desulfovibrio salexigens).